The primary structure comprises 44 residues: Phosphatase RapE inhibitor (44 aa).

2 propeptides span residues 1 to 30 and 36 to 44; these read MKSK…MKEA and LAPTHEFLV.

This sequence belongs to the Phr family. Post-translationally, contains a predicted signal peptide cleavage site in the N-terminal region, however the propeptide is probably only subject to processing events at the ends of the mature peptide.

It localises to the secreted. The protein resides in the cytoplasm. Functionally, signaling molecule involved in the regulation of sporulation. Secreted during production, but the mature peptide acts intracellularly, indicating that it needs to be imported into the cell to function. Inhibitor of the RapE phosphatase activity. Does not inhibit the phosphatase activity of RapA and RapB. Probably plays a dispensable role in the overall context of sporulation initiation. This Bacillus subtilis (strain 168) protein is Phosphatase RapE inhibitor (phrE).